The chain runs to 248 residues: Probable transcriptional regulatory protein PFL_4766 (248 aa).

It belongs to the TACO1 family.

It localises to the cytoplasm. The protein is Probable transcriptional regulatory protein PFL_4766 of Pseudomonas fluorescens (strain ATCC BAA-477 / NRRL B-23932 / Pf-5).